Here is a 273-residue protein sequence, read N- to C-terminus: Dermonecrotic toxin LdSicTox-alphaIB3ai (273 aa).

H5 is an active-site residue. Residues E25 and D27 each contribute to the Mg(2+) site. H41 serves as the catalytic Nucleophile. 2 disulfide bridges follow: C45–C51 and C47–C190. Position 85 (D85) interacts with Mg(2+).

The protein belongs to the arthropod phospholipase D family. Class II subfamily. Mg(2+) is required as a cofactor. In terms of tissue distribution, expressed by the venom gland.

The protein localises to the secreted. The enzyme catalyses an N-(acyl)-sphingosylphosphocholine = an N-(acyl)-sphingosyl-1,3-cyclic phosphate + choline. It catalyses the reaction an N-(acyl)-sphingosylphosphoethanolamine = an N-(acyl)-sphingosyl-1,3-cyclic phosphate + ethanolamine. The catalysed reaction is a 1-acyl-sn-glycero-3-phosphocholine = a 1-acyl-sn-glycero-2,3-cyclic phosphate + choline. It carries out the reaction a 1-acyl-sn-glycero-3-phosphoethanolamine = a 1-acyl-sn-glycero-2,3-cyclic phosphate + ethanolamine. Its function is as follows. Dermonecrotic toxins cleave the phosphodiester linkage between the phosphate and headgroup of certain phospholipids (sphingolipid and lysolipid substrates), forming an alcohol (often choline) and a cyclic phosphate. This toxin acts on sphingomyelin (SM). It may also act on ceramide phosphoethanolamine (CPE), lysophosphatidylcholine (LPC) and lysophosphatidylethanolamine (LPE), but not on lysophosphatidylserine (LPS), and lysophosphatidylglycerol (LPG). It acts by transphosphatidylation, releasing exclusively cyclic phosphate products as second products. Induces dermonecrosis, hemolysis, increased vascular permeability, edema, inflammatory response, and platelet aggregation. In Loxosceles deserta (Desert recluse spider), this protein is Dermonecrotic toxin LdSicTox-alphaIB3ai.